We begin with the raw amino-acid sequence, 252 residues long: MIRTKISAENLNLFYGDFHALKDINISMGERQVTALIGPSGCGKSTFLRCLNRMNDIIPTCRVQGKLMFEDSEIYHPDTDVVALRKRVGMVFQAPNPFPKSVYENVAYAPKLHGLKDKARLDEIVETSLRQAALWDEVKDRLHKPALGLSGGQQQRLCIARALAIQPEVLLMDEPTSALDPISTLKIEELIRELKQYYTIVIVTHNMQQAARISDKTAFFLVGDLVEFDDTEVIFTNPKDQRTEDYITGRFG.

The 242-residue stretch at Ile-6–Ile-247 folds into the ABC transporter domain. Residue Gly-38 to Ser-45 participates in ATP binding.

It belongs to the ABC transporter superfamily. Phosphate importer (TC 3.A.1.7) family. In terms of assembly, the complex is composed of two ATP-binding proteins (PstB), two transmembrane proteins (PstC and PstA) and a solute-binding protein (PstS).

It localises to the cell membrane. The enzyme catalyses phosphate(out) + ATP + H2O = ADP + 2 phosphate(in) + H(+). Part of the ABC transporter complex PstSACB involved in phosphate import. Responsible for energy coupling to the transport system. This Heliobacterium mobile (Heliobacillus mobilis) protein is Phosphate import ATP-binding protein PstB.